We begin with the raw amino-acid sequence, 334 residues long: AA9 family lytic polysaccharide monooxygenase A (334 aa).

A signal peptide spans M1–A22. Positions 23 and 108 each coordinate Cu(2+). Disulfide bonds link C78–C200 and C119–C123. N160 carries an N-linked (GlcNAc...) asparagine glycan. The O2 site is built by H186 and Q195. Y197 lines the Cu(2+) pocket. N208 is a glycosylation site (N-linked (GlcNAc...) asparagine). The disordered stretch occupies residues G244–P304. Residues T249 to P265 are compositionally biased toward low complexity.

The protein belongs to the polysaccharide monooxygenase AA9 family. The cofactor is Cu(2+).

The protein resides in the secreted. The catalysed reaction is [(1-&gt;4)-beta-D-glucosyl]n+m + reduced acceptor + O2 = 4-dehydro-beta-D-glucosyl-[(1-&gt;4)-beta-D-glucosyl]n-1 + [(1-&gt;4)-beta-D-glucosyl]m + acceptor + H2O.. Functionally, lytic polysaccharide monooxygenase (LPMO) that depolymerizes crystalline and amorphous polysaccharides via the oxidation of scissile alpha- or beta-(1-4)-glycosidic bonds, yielding C1 or C4 oxidation products. Catalysis by LPMOs requires the reduction of the active-site copper from Cu(II) to Cu(I) by a reducing agent and H(2)O(2) or O(2) as a cosubstrate. Active on hemicelluloses, including xylan, glucomannan, and xyloglucan. Shows clear activity on cellooligosaccharides, generating C4 oxidation products. Also displays activity on konjac glucomannan (KGM), a linear beta-1,4-linked mannan with randomly distributed glucosyl residues; as well as trace activity on lichenan, a linear beta-1,3-beta-1,4-glucan with a 1:2 ratio of beta-1,3 to beta-1,4 linkages. Has no activity on ivory nut mannan (INM), a linear beta-1,4-linked mannan without substitutions. The protein is AA9 family lytic polysaccharide monooxygenase A of Malbranchea cinnamomea (Thermophilic fungus).